The chain runs to 614 residues: Kelch-like protein 40 (614 aa).

The 68-residue stretch at 33-100 folds into the BTB domain; that stretch reads IDCVLKIQGK…IYTSEIEITE (68 aa). The BACK domain maps to 135 to 237; that stretch reads CLAIFRLGLL…PQDYIKNKVE (103 aa). Kelch repeat units lie at residues 353 to 405, 406 to 455, 456 to 503, 504 to 550, and 552 to 606; these read QLFV…ESEN, SIYL…SHDN, LVYV…VHKG, KIFI…SMNG, and LYAI…AARL.

It belongs to the KLHL40 family. As to quaternary structure, component of the BCR(KLHL40) E3 ubiquitin ligase complex.

It localises to the cytoplasm. It is found in the myofibril. The protein localises to the sarcomere. Its subcellular location is the a band. The protein resides in the i band. Functionally, substrate-specific adapter of a BCR (BTB-CUL3-RBX1) E3 ubiquitin ligase complex that acts as a key regulator of skeletal muscle development. The protein is Kelch-like protein 40 (klhl40) of Xenopus laevis (African clawed frog).